Reading from the N-terminus, the 135-residue chain is Large ribosomal subunit protein uL22c (135 aa).

Belongs to the universal ribosomal protein uL22 family. As to quaternary structure, part of the 50S ribosomal subunit.

Its subcellular location is the plastid. In terms of biological role, this protein binds specifically to 23S rRNA. The globular domain of the protein is located near the polypeptide exit tunnel on the outside of the subunit, while an extended beta-hairpin is found that lines the wall of the exit tunnel in the center of the 70S ribosome. This is Large ribosomal subunit protein uL22c (rpl22) from Cuscuta reflexa (Southern Asian dodder).